The primary structure comprises 143 residues: Large ribosomal subunit protein uL11 (143 aa).

This sequence belongs to the universal ribosomal protein uL11 family. Part of the ribosomal stalk of the 50S ribosomal subunit. Interacts with L10 and the large rRNA to form the base of the stalk. L10 forms an elongated spine to which L12 dimers bind in a sequential fashion forming a multimeric L10(L12)X complex. One or more lysine residues are methylated.

Forms part of the ribosomal stalk which helps the ribosome interact with GTP-bound translation factors. The chain is Large ribosomal subunit protein uL11 from Janthinobacterium sp. (strain Marseille) (Minibacterium massiliensis).